A 551-amino-acid polypeptide reads, in one-letter code: NAD(P)H-quinone oxidoreductase chain 4 (551 aa).

Transmembrane regions (helical) follow at residues 25-45 (FPWLSLSILFPIVGSLMVPFI), 56-76 (WFALGIALTTFLITVAAYLNG), 111-131 (LILLTSFITTLAVLAAWPVTF), 133-153 (PKLFFFLMLAMDGGQIAVFAV), 157-177 (LLFFLAWELELLPVYLLLAIW), 189-209 (FILYTAGSSLFILLAALAMGF), 233-253 (LLCYAGLLIAFGVKLPIVPLH), 264-284 (TAPVHMLLAGILLKMGGYALM), 298-318 (FAPLLVVLGVVNIIYAALTSF), 335-355 (MGFVLIGIGSFSALGTSGAML), 356-376 (QMISHGLIGASLFFLVGATYD), 397-417 (FALWTVCSLASLALPGMSGFV), 438-458 (IVIDGLAAVGVILTPIYLLSM), and 485-505 (VYIIGCLLVPIIGIGLYPRLM).

It belongs to the complex I subunit 4 family.

The protein resides in the cellular thylakoid membrane. It catalyses the reaction a plastoquinone + NADH + (n+1) H(+)(in) = a plastoquinol + NAD(+) + n H(+)(out). The enzyme catalyses a plastoquinone + NADPH + (n+1) H(+)(in) = a plastoquinol + NADP(+) + n H(+)(out). NDH-1 shuttles electrons from NAD(P)H, via FMN and iron-sulfur (Fe-S) centers, to quinones in the respiratory chain. The immediate electron acceptor for the enzyme in this species is believed to be plastoquinone. Couples the redox reaction to proton translocation (for every two electrons transferred, four hydrogen ions are translocated across the cytoplasmic membrane), and thus conserves the redox energy in a proton gradient. This is NAD(P)H-quinone oxidoreductase chain 4 from Synechococcus sp. (strain WH7803).